Consider the following 388-residue polypeptide: Succinate--CoA ligase [ADP-forming] subunit beta (388 aa).

Positions 9 to 244 constitute an ATP-grasp domain; that stretch reads KQLFAEYGLP…PSQDDPREAH (236 aa). Residues Lys-46, 53-55, Glu-99, Thr-102, and Glu-107 contribute to the ATP site; that span reads GRG. Mg(2+) contacts are provided by Asn-199 and Asp-213. Residues Asn-264 and 321–323 contribute to the substrate site; that span reads GIV.

It belongs to the succinate/malate CoA ligase beta subunit family. Heterotetramer of two alpha and two beta subunits. The cofactor is Mg(2+).

The catalysed reaction is succinate + ATP + CoA = succinyl-CoA + ADP + phosphate. The enzyme catalyses GTP + succinate + CoA = succinyl-CoA + GDP + phosphate. It functions in the pathway carbohydrate metabolism; tricarboxylic acid cycle; succinate from succinyl-CoA (ligase route): step 1/1. In terms of biological role, succinyl-CoA synthetase functions in the citric acid cycle (TCA), coupling the hydrolysis of succinyl-CoA to the synthesis of either ATP or GTP and thus represents the only step of substrate-level phosphorylation in the TCA. The beta subunit provides nucleotide specificity of the enzyme and binds the substrate succinate, while the binding sites for coenzyme A and phosphate are found in the alpha subunit. In Ectopseudomonas mendocina (strain ymp) (Pseudomonas mendocina), this protein is Succinate--CoA ligase [ADP-forming] subunit beta.